We begin with the raw amino-acid sequence, 319 residues long: Ribonuclease Z (319 aa).

H62, H64, D66, H67, H145, D215, and H273 together coordinate Zn(2+). D66 serves as the catalytic Proton acceptor.

Belongs to the RNase Z family. In terms of assembly, homodimer. Zn(2+) serves as cofactor.

The catalysed reaction is Endonucleolytic cleavage of RNA, removing extra 3' nucleotides from tRNA precursor, generating 3' termini of tRNAs. A 3'-hydroxy group is left at the tRNA terminus and a 5'-phosphoryl group is left at the trailer molecule.. Zinc phosphodiesterase, which displays some tRNA 3'-processing endonuclease activity. Probably involved in tRNA maturation, by removing a 3'-trailer from precursor tRNA. In Borrelia hermsii (strain HS1 / DAH), this protein is Ribonuclease Z.